A 385-amino-acid polypeptide reads, in one-letter code: Lipid-A-disaccharide synthase (385 aa).

The protein belongs to the LpxB family.

The catalysed reaction is a lipid X + a UDP-2-N,3-O-bis[(3R)-3-hydroxyacyl]-alpha-D-glucosamine = a lipid A disaccharide + UDP + H(+). It functions in the pathway bacterial outer membrane biogenesis; LPS lipid A biosynthesis. Its function is as follows. Condensation of UDP-2,3-diacylglucosamine and 2,3-diacylglucosamine-1-phosphate to form lipid A disaccharide, a precursor of lipid A, a phosphorylated glycolipid that anchors the lipopolysaccharide to the outer membrane of the cell. In Rickettsia canadensis (strain McKiel), this protein is Lipid-A-disaccharide synthase.